Here is a 396-residue protein sequence, read N- to C-terminus: Elongation factor Tu (396 aa).

Positions 10 to 206 (KPHVNVGTIG…ALDTYIPTPE (197 aa)) constitute a tr-type G domain. A G1 region spans residues 19 to 26 (GHVDHGKT). 19–26 (GHVDHGKT) provides a ligand contact to GTP. Thr26 is a Mg(2+) binding site. Positions 60 to 64 (GITIN) are G2. A G3 region spans residues 81-84 (DCPG). Residues 81-85 (DCPGH) and 136-139 (NKCD) contribute to the GTP site. A G4 region spans residues 136 to 139 (NKCD). The segment at 174–176 (SAK) is G5.

Belongs to the TRAFAC class translation factor GTPase superfamily. Classic translation factor GTPase family. EF-Tu/EF-1A subfamily. Monomer.

The protein localises to the cytoplasm. The enzyme catalyses GTP + H2O = GDP + phosphate + H(+). In terms of biological role, GTP hydrolase that promotes the GTP-dependent binding of aminoacyl-tRNA to the A-site of ribosomes during protein biosynthesis. The sequence is that of Elongation factor Tu from Burkholderia cepacia (Pseudomonas cepacia).